A 207-amino-acid chain; its full sequence is Large ribosomal subunit protein bL25 (207 aa).

Residues 1–20 (MANHQIKAQRRKDEGKGASR) are disordered.

This sequence belongs to the bacterial ribosomal protein bL25 family. CTC subfamily. Part of the 50S ribosomal subunit; part of the 5S rRNA/L5/L18/L25 subcomplex. Contacts the 5S rRNA. Binds to the 5S rRNA independently of L5 and L18.

In terms of biological role, this is one of the proteins that binds to the 5S RNA in the ribosome where it forms part of the central protuberance. In Xylella fastidiosa (strain M23), this protein is Large ribosomal subunit protein bL25.